The chain runs to 326 residues: Target of rapamycin complex subunit lst8 (326 aa).

WD repeat units lie at residues 1–37, 40–80, 83–122, 126–165, 168–207, 218–257, and 268–309; these read MNVNQGTVGSDPVILATAGYDHTVRFWQAHSGICTRT, HQDS…PVIN, GVSKNITSVGFHEDGRWMYTGGEDCMARIWDLRSRNLQCQ, QVNAPINCVCLHPNQAELIVGDQSGVIHIWDLKTDHNEQL, EPDVSVNSVHIDPDASYMAAVNSSGNCYVWNLAGGMGDEV, AHKRYSLRCKFSPDSTLLATCSADQTCKIWRTSNFSLMTE, and TSRG…REYS.

Belongs to the WD repeat LST8 family. As to quaternary structure, part of the mechanistic target of rapamycin complex 1 (mTORC1) which contains MTOR, MLST8 and RPTOR. Component of the mechanistic target of rapamycin complex 2 (mTORC2), consisting in two heterotretramers composed of MTOR, MLST8, RICTOR and MAPKAP1/SIN1.

It is found in the lysosome membrane. Its subcellular location is the cytoplasm. In terms of biological role, subunit of both mTORC1 and mTORC2, which regulates cell growth and survival in response to nutrient and hormonal signals. mTORC1 is activated in response to growth factors or amino acids. In response to nutrients, mTORC1 is recruited to the lysosome membrane and promotes protein, lipid and nucleotide synthesis by phosphorylating several substrates, such as ribosomal protein S6 kinase (RPS6KB1 and RPS6KB2) and EIF4EBP1 (4E-BP1). In the same time, it inhibits catabolic pathways by phosphorylating the autophagy initiation components ULK1 and ATG13, as well as transcription factor TFEB, a master regulators of lysosomal biogenesis and autophagy. The mTORC1 complex is inhibited in response to starvation and amino acid depletion. Within mTORC1, MLST8 interacts directly with MTOR and enhances its kinase activity. In nutrient-poor conditions, stabilizes the MTOR-RPTOR interaction and favors RPTOR-mediated inhibition of MTOR activity. As part of the mTORC2 complex, transduces signals from growth factors to pathways involved in proliferation, cytoskeletal organization, lipogenesis and anabolic output. mTORC2 is also activated by growth factors, but seems to be nutrient-insensitive. In response to growth factors, mTORC2 phosphorylates and activates AGC protein kinase family members, including AKT (AKT1, AKT2 and AKT3), PKC (PRKCA, PRKCB and PRKCE) and SGK1. mTORC2 functions upstream of Rho GTPases to regulate the actin cytoskeleton, probably by activating one or more Rho-type guanine nucleotide exchange factors. mTORC2 promotes the serum-induced formation of stress-fibers or F-actin. Within mTORC2, MLST8 acts as a bridge between MAPKAP1/SIN1 and MTOR. This is Target of rapamycin complex subunit lst8 (mlst8) from Danio rerio (Zebrafish).